Consider the following 1028-residue polypeptide: Formin-like protein 3 (1028 aa).

Gly-2 carries N-myristoyl glycine lipidation. The 447-residue stretch at 26-472 (MPMPEPCELE…EAFQRRCHLE (447 aa)) folds into the GBD/FH3 domain. At Thr-95 the chain carries Phosphothreonine. At Ser-174 the chain carries Phosphoserine. Residues 493–541 (ELSEGMPPSDLDLLAPAPPPEEVLPLPPPPAPPLPPPPPPLPDKCPPAP) form a disordered region. Residues 508–541 (PAPPPEEVLPLPPPPAPPLPPPPPPLPDKCPPAP) are compositionally biased toward pro residues. One can recognise an FH2 domain in the interval 561 to 951 (IKKPIKTKFR…MREKQLAQEA (391 aa)). One can recognise a DAD domain in the interval 986–1018 (YEGKDGTIEDIITVLKSVPFTARTAKRGSRFFC). A Phosphoserine modification is found at Ser-1014.

The protein belongs to the formin homology family. In terms of assembly, interacts with SRGAP2 (via SH3 domain). Expressed in endothelial cells.

The protein localises to the cytoplasm. It localises to the cell membrane. Plays a role in the regulation of cell morphology and cytoskeletal organization. Required in the control of cell shape and migration. Required for developmental angiogenesis. In this process, required for microtubule reorganization and for efficient endothelial cell elongation. In quiescent endothelial cells, triggers rearrangement of the actin cytoskeleton, but does not alter microtubule alignement. The sequence is that of Formin-like protein 3 (FMNL3) from Homo sapiens (Human).